A 470-amino-acid polypeptide reads, in one-letter code: Uronate isomerase (470 aa).

The protein belongs to the metallo-dependent hydrolases superfamily. Uronate isomerase family.

The catalysed reaction is D-glucuronate = D-fructuronate. It carries out the reaction aldehydo-D-galacturonate = keto-D-tagaturonate. It functions in the pathway carbohydrate metabolism; pentose and glucuronate interconversion. The polypeptide is Uronate isomerase (Escherichia coli O8 (strain IAI1)).